A 152-amino-acid polypeptide reads, in one-letter code: Ribosome maturation factor RimP (152 aa).

The protein belongs to the RimP family.

The protein localises to the cytoplasm. Required for maturation of 30S ribosomal subunits. In Pseudothermotoga lettingae (strain ATCC BAA-301 / DSM 14385 / NBRC 107922 / TMO) (Thermotoga lettingae), this protein is Ribosome maturation factor RimP.